Here is a 296-residue protein sequence, read N- to C-terminus: Nucleotide-binding protein SPCG_1551 (296 aa).

Position 13-20 (13-20 (GMSGAGKT)) interacts with ATP. 63-66 (DMRS) contributes to the GTP binding site.

Belongs to the RapZ-like family.

Displays ATPase and GTPase activities. This chain is Nucleotide-binding protein SPCG_1551, found in Streptococcus pneumoniae (strain CGSP14).